Reading from the N-terminus, the 983-residue chain is Bifunctional glutamine synthetase adenylyltransferase/adenylyl-removing enzyme (983 aa).

The segment at 1–490 (MDRKSSVTID…AHGQVFYSPV (490 aa)) is adenylyl removase. Residues 496–983 (RIPTQDLRMS…RVVDAVFWNQ (488 aa)) form an adenylyl transferase region.

It belongs to the GlnE family. Requires Mg(2+) as cofactor.

It catalyses the reaction [glutamine synthetase]-O(4)-(5'-adenylyl)-L-tyrosine + phosphate = [glutamine synthetase]-L-tyrosine + ADP. The enzyme catalyses [glutamine synthetase]-L-tyrosine + ATP = [glutamine synthetase]-O(4)-(5'-adenylyl)-L-tyrosine + diphosphate. Involved in the regulation of glutamine synthetase GlnA, a key enzyme in the process to assimilate ammonia. When cellular nitrogen levels are high, the C-terminal adenylyl transferase (AT) inactivates GlnA by covalent transfer of an adenylyl group from ATP to specific tyrosine residue of GlnA, thus reducing its activity. Conversely, when nitrogen levels are low, the N-terminal adenylyl removase (AR) activates GlnA by removing the adenylyl group by phosphorolysis, increasing its activity. The regulatory region of GlnE binds the signal transduction protein PII (GlnB) which indicates the nitrogen status of the cell. This chain is Bifunctional glutamine synthetase adenylyltransferase/adenylyl-removing enzyme, found in Cutibacterium acnes (strain DSM 16379 / KPA171202) (Propionibacterium acnes).